We begin with the raw amino-acid sequence, 346 residues long: NADH-quinone oxidoreductase subunit H (346 aa).

The next 9 membrane-spanning stretches (helical) occupy residues 13–33 (ILLI…ALAF), 51–71 (PNVV…KYIV), 83–103 (AVYF…WAVI), 116–136 (VAVL…IMGG), 162–182 (IGLI…TAIV), 191–211 (LLNW…ISAL), 244–264 (FMIG…LLFF), 278–298 (VFWM…VKAI), and 310–330 (LGWK…AFMA).

Belongs to the complex I subunit 1 family. NDH-1 is composed of 14 different subunits. Subunits NuoA, H, J, K, L, M, N constitute the membrane sector of the complex.

It is found in the cell inner membrane. It carries out the reaction a quinone + NADH + 5 H(+)(in) = a quinol + NAD(+) + 4 H(+)(out). In terms of biological role, NDH-1 shuttles electrons from NADH, via FMN and iron-sulfur (Fe-S) centers, to quinones in the respiratory chain. The immediate electron acceptor for the enzyme in this species is believed to be ubiquinone. Couples the redox reaction to proton translocation (for every two electrons transferred, four hydrogen ions are translocated across the cytoplasmic membrane), and thus conserves the redox energy in a proton gradient. This subunit may bind ubiquinone. The sequence is that of NADH-quinone oxidoreductase subunit H from Jannaschia sp. (strain CCS1).